A 108-amino-acid chain; its full sequence is Circadian clock oscillator protein KaiB (108 aa).

Belongs to the KaiB family. As to quaternary structure, undergoes a major conformational rearrangment; in the free state forms homotetramers with 2 dimers. When bound to the CI domain of KaiC, KaiA or CikA switches to a monomeric thioredoxin-fold (KaiB(fs)). The KaiABC complex composition changes during the circadian cycle to control KaiC phosphorylation. Complexes KaiC(6), KaiA(2-4):KaiC(6), KaiB(6):KaiC(6) and KaiC(6):KaiB(6):KaiA(12) are among the most important forms, many form cooperatively. Binds to KaiA; 1 KaiB(fs) binds to the KaiA homodimer. Binds to the B-loop in the CI domain of KaiC; SasA and KaiB compete to bind to the CI domain. Binding to KaiC CI domain occurs 1:1. KaiA and CikA bind to the same region of KaiB(fs) and therefore compete.

Its function is as follows. Key component of the KaiABC oscillator complex, which constitutes the main circadian regulator in cyanobacteria. Its composition changes during the circadian cycle to control KaiC phosphorylation. KaiA stimulates KaiC autophosphorylation, while KaiB sequesters KaiA, leading to KaiC autodephosphorylation. KaiA binding to KaiC yields KaiA(2-4):KaiC(6) complexes which stimulate KaiC autophosphorylation. Phospho-Ser-431 KaiC accumulation triggers binding of KaiB to form the KaiB(6):KaiC(6) complex, leading to changes in the output regulators CikA and SasA. KaiB switches to a thioredoxin-like fold (KaiB(fs)) in complex with KaiC. KaiB(6):KaiC(6) formation exposes a site for KaiA binding that sequesters KaiA from the CII domain, making the KaiC(6):KaiB(6):KaiA(12) complex that results in KaiC autodephosphorylation. Complete dephosphorylation of KaiC leads to dissociation of KaiA(2):KaiB(1), completing 1 cycle of the Kai oscillator. A metamorphic protein which reversibly switches between an inactive tetrameric fold and a rare, thioredoxin-like monomeric fold (KaiB(fs)). KaiB(fs) binds phospho-KaiC, KaiA and CikA. KaiA and CikA compete for binding to KaiB(fs), and KaiB(fs) and SasA compete for binding to KaiC, thus the clock oscillator and output signal pathway are tightly coupled. In Thermosynechococcus vestitus (strain NIES-2133 / IAM M-273 / BP-1), this protein is Circadian clock oscillator protein KaiB.